The primary structure comprises 141 residues: Hemoglobin subunit alpha (141 aa).

One can recognise a Globin domain in the interval 1–141 (VLSSKDKTNV…VSTVLTSKYR (141 aa)). Position 3 is a phosphoserine (Ser3). Lys7 carries the post-translational modification N6-succinyllysine. Thr8 bears the Phosphothreonine mark. The residue at position 11 (Lys11) is an N6-succinyllysine. N6-acetyllysine; alternate is present on Lys16. An N6-succinyllysine; alternate modification is found at Lys16. Tyr24 carries the post-translational modification Phosphotyrosine. Position 40 is an N6-succinyllysine (Lys40). The residue at position 49 (Ser49) is a Phosphoserine. Residue His58 participates in O2 binding. Residue His87 coordinates heme b. Ser102 bears the Phosphoserine mark. A Phosphothreonine modification is found at Thr108. Ser124 carries the post-translational modification Phosphoserine. Residues Thr134 and Thr137 each carry the phosphothreonine modification. Residue Ser138 is modified to Phosphoserine.

Belongs to the globin family. In terms of assembly, heterotetramer of two alpha chains and two beta chains. As to expression, red blood cells.

In terms of biological role, involved in oxygen transport from the lung to the various peripheral tissues. Its function is as follows. Hemopressin acts as an antagonist peptide of the cannabinoid receptor CNR1. Hemopressin-binding efficiently blocks cannabinoid receptor CNR1 and subsequent signaling. This Camelus dromedarius (Dromedary) protein is Hemoglobin subunit alpha (HBA).